A 380-amino-acid polypeptide reads, in one-letter code: MAPNIRKSHPLVKMINNSLIDLPTPPNISIWWNFGSLLGICLATQILTGLLLAMHYTADTTLAFSSVAHTCRNVQYGWLIRNLHANGASLFFICIYMHIGRGIYYGSYLYKETWNTGIILLLTLMATAFVGYVLPWGQMSFWGATVITNLFSAIPYIGQTLVEWAWGGFSVDNPTLTRFFALHFLLPFLIAGLTLIHLTFLHESGSNNPLGITSNCDKIPFHPYYSLKDILGFMLMYLPLMTLALFTPNLLGDPENFTPANPLVTPPHIKPEWYFLFAYAILRSIPNKLGGVLALAASVLILFLSPLLHKSKQRTMTFRPLSQSLFWLLVTNLLILTWVGSQPVEHPFIIIGQLASLSYFTTLLILLPLTGALENKILNY.

The next 4 helical transmembrane spans lie at 34–54 (FGSL…LLAM), 78–99 (WLIR…YMHI), 114–134 (WNTG…GYVL), and 179–199 (FFAL…IHLT). Heme b is bound by residues H84 and H98. Heme b contacts are provided by H183 and H197. H202 serves as a coordination point for a ubiquinone. 4 helical membrane passes run 227-247 (LKDI…ALFT), 289-309 (LGGV…PLLH), 321-341 (LSQS…WVGS), and 348-368 (FIII…ILLP).

This sequence belongs to the cytochrome b family. The cytochrome bc1 complex contains 11 subunits: 3 respiratory subunits (MT-CYB, CYC1 and UQCRFS1), 2 core proteins (UQCRC1 and UQCRC2) and 6 low-molecular weight proteins (UQCRH/QCR6, UQCRB/QCR7, UQCRQ/QCR8, UQCR10/QCR9, UQCR11/QCR10 and a cleavage product of UQCRFS1). This cytochrome bc1 complex then forms a dimer. Heme b is required as a cofactor.

It localises to the mitochondrion inner membrane. Functionally, component of the ubiquinol-cytochrome c reductase complex (complex III or cytochrome b-c1 complex) that is part of the mitochondrial respiratory chain. The b-c1 complex mediates electron transfer from ubiquinol to cytochrome c. Contributes to the generation of a proton gradient across the mitochondrial membrane that is then used for ATP synthesis. This Falco peregrinus (Peregrine falcon) protein is Cytochrome b (MT-CYB).